A 37-amino-acid chain; its full sequence is Protein 6.3 (37 aa).

The chain is Protein 6.3 from Escherichia phage T7 (Bacteriophage T7).